We begin with the raw amino-acid sequence, 211 residues long: HTH-type transcriptional repressor FabR (211 aa).

In terms of domain architecture, HTH tetR-type spans 10 to 70 (RTRRSLIEAA…TMVDESGLML (61 aa)). Positions 33–52 (SLREVSREAGIAPTSFYRHF) form a DNA-binding region, H-T-H motif.

In terms of assembly, homodimer.

The protein resides in the cytoplasm. Its function is as follows. Represses the transcription of fabB, involved in unsaturated fatty acid (UFA) biosynthesis. By controlling UFA production, FabR directly influences the physical properties of the membrane bilayer. The chain is HTH-type transcriptional repressor FabR from Yersinia pseudotuberculosis serotype O:1b (strain IP 31758).